The following is a 683-amino-acid chain: Zinc finger protein 510 (683 aa).

Positions 46–117 constitute a KRAB domain; the sequence is VSFKDVTIEF…EEEFSNQSHP (72 aa). The C2H2-type 1; degenerate zinc finger occupies 254–276; the sequence is FECNKIGKAFNDKANCVKHNSSH. C2H2-type zinc fingers lie at residues 404–426, 432–454, 460–482, 488–510, 516–538, 544–566, 572–594, 600–622, and 628–650; these read YKCN…QRTH, FECS…QRIH, YKCN…QRIH, YECS…HRIH, FQCN…QRTH, YQCN…QKTH, and FKCN…QRIH.

Belongs to the krueppel C2H2-type zinc-finger protein family.

The protein localises to the nucleus. In terms of biological role, may be involved in transcriptional regulation. The sequence is that of Zinc finger protein 510 (ZNF510) from Homo sapiens (Human).